The following is a 275-amino-acid chain: Tryptophan synthase alpha chain (275 aa).

The active-site Proton acceptor is the Glu51.

Belongs to the TrpA family. Tetramer of two alpha and two beta chains.

It carries out the reaction (1S,2R)-1-C-(indol-3-yl)glycerol 3-phosphate + L-serine = D-glyceraldehyde 3-phosphate + L-tryptophan + H2O. It participates in amino-acid biosynthesis; L-tryptophan biosynthesis; L-tryptophan from chorismate: step 5/5. Functionally, the alpha subunit is responsible for the aldol cleavage of indoleglycerol phosphate to indole and glyceraldehyde 3-phosphate. This Caulobacter vibrioides (strain ATCC 19089 / CIP 103742 / CB 15) (Caulobacter crescentus) protein is Tryptophan synthase alpha chain.